Here is a 338-residue protein sequence, read N- to C-terminus: Fructose-1,6-bisphosphatase class 1 (338 aa).

Glutamate 90, aspartate 112, leucine 114, and aspartate 115 together coordinate Mg(2+). Residues 115–118 (DGSS), asparagine 207, and lysine 273 contribute to the substrate site. Position 279 (glutamate 279) interacts with Mg(2+).

This sequence belongs to the FBPase class 1 family. Homotetramer. Mg(2+) is required as a cofactor.

Its subcellular location is the cytoplasm. It carries out the reaction beta-D-fructose 1,6-bisphosphate + H2O = beta-D-fructose 6-phosphate + phosphate. Its pathway is carbohydrate biosynthesis; gluconeogenesis. This is Fructose-1,6-bisphosphatase class 1 from Stenotrophomonas maltophilia (strain K279a).